Here is a 95-residue protein sequence, read N- to C-terminus: Protein TusB (95 aa).

This sequence belongs to the DsrH/TusB family. As to quaternary structure, heterohexamer, formed by a dimer of trimers. The hexameric TusBCD complex contains 2 copies each of TusB, TusC and TusD. The TusBCD complex interacts with TusE.

It is found in the cytoplasm. Functionally, part of a sulfur-relay system required for 2-thiolation of 5-methylaminomethyl-2-thiouridine (mnm(5)s(2)U) at tRNA wobble positions. This Escherichia coli O45:K1 (strain S88 / ExPEC) protein is Protein TusB.